Reading from the N-terminus, the 544-residue chain is Chaperonin GroEL (544 aa).

ATP contacts are provided by residues 29–32, 86–90, glycine 413, 476–478, and aspartate 492; these read TLGP, DGTTT, and NAA. The tract at residues 522–544 is disordered; sequence PDPNANNNAAAGANPAAGMGGMM. Low complexity predominate over residues 524–538; sequence PNANNNAAAGANPAA.

The protein belongs to the chaperonin (HSP60) family. Forms a cylinder of 14 subunits composed of two heptameric rings stacked back-to-back. Interacts with the co-chaperonin GroES.

It localises to the cytoplasm. It catalyses the reaction ATP + H2O + a folded polypeptide = ADP + phosphate + an unfolded polypeptide.. Together with its co-chaperonin GroES, plays an essential role in assisting protein folding. The GroEL-GroES system forms a nano-cage that allows encapsulation of the non-native substrate proteins and provides a physical environment optimized to promote and accelerate protein folding. The protein is Chaperonin GroEL of Lacticaseibacillus casei (strain BL23) (Lactobacillus casei).